The chain runs to 465 residues: ATP-dependent rRNA helicase rrp3 (465 aa).

The segment at 1 to 46 is disordered; that stretch reads MSALKKRKITEKQPETNSDSEAESVSSRGSAKDETQTSGEEPAPAK. Over residues 15 to 29 the composition is skewed to polar residues; it reads ETNSDSEAESVSSRG. The Q motif signature appears at 46 to 74; it reads KSFKELGIIDQLCEACENMGYKAPTPIQS. The region spanning 77 to 248 is the Helicase ATP-binding domain; it reads IPLALEGRDV…RASLSNPVRV (172 aa). 90–97 provides a ligand contact to ATP; that stretch reads AETGSGKT. The DEAD box motif lies at 196–199; that stretch reads DEAD. Residues 275 to 419 enclose the Helicase C-terminal domain; sequence YLVYLLNEFA…EYQVEKDEVM (145 aa). Positions 436–465 are disordered; it reads MKSFDEKKGARGKKFGKGKRSRDDMDQEEG. Residues 445-455 are compositionally biased toward basic residues; that stretch reads ARGKKFGKGKR.

It belongs to the DEAD box helicase family. DDX47/RRP3 subfamily. In terms of assembly, interacts with the SSU processome.

The protein resides in the nucleus. The catalysed reaction is ATP + H2O = ADP + phosphate + H(+). In terms of biological role, ATP-dependent rRNA helicase required for pre-ribosomal RNA processing. Involved in the maturation of the 35S-pre-rRNA and to its cleavage to mature 18S rRNA. This chain is ATP-dependent rRNA helicase rrp3, found in Emericella nidulans (strain FGSC A4 / ATCC 38163 / CBS 112.46 / NRRL 194 / M139) (Aspergillus nidulans).